A 339-amino-acid polypeptide reads, in one-letter code: UDP-N-acetylenolpyruvoylglucosamine reductase (339 aa).

One can recognise an FAD-binding PCMH-type domain in the interval 18-189; it reads GVEVKAKWFA…LRVRFALNRV (172 aa). Residue Arg-166 is part of the active site. The active-site Proton donor is Ser-239. Residue Glu-335 is part of the active site.

This sequence belongs to the MurB family. FAD is required as a cofactor.

Its subcellular location is the cytoplasm. It catalyses the reaction UDP-N-acetyl-alpha-D-muramate + NADP(+) = UDP-N-acetyl-3-O-(1-carboxyvinyl)-alpha-D-glucosamine + NADPH + H(+). It participates in cell wall biogenesis; peptidoglycan biosynthesis. In terms of biological role, cell wall formation. This is UDP-N-acetylenolpyruvoylglucosamine reductase from Pseudomonas fluorescens (strain ATCC BAA-477 / NRRL B-23932 / Pf-5).